We begin with the raw amino-acid sequence, 277 residues long: MAEVLEFRVPAGSAQTLLVWGLEPTVGLEHSLFSVFSKFGLLYSVRVHSNAAVAGPGCYAIIKFYSAADASRAQHACNGQRLFQNSPLKVCVCTKQKGFQQQVLALNSNKCQELANHYLGFNGWSSRIITLQNVSGFDDENEEVGKKRSVRYLCAVEVTLPNHGVRTRGVGLGEADVESGEDPLEFGTATRRVQKLAVGKALSSAFQKILLVVLESGKVAVEYNHAAEEPTDSLTEEELEGLVQVSELPLEPFDLEEEVLSDLTLDDELPVWEVPSN.

The RRM domain occupies Gln15 to Lys95.

As to quaternary structure, homodimer.

It localises to the nucleus. Its subcellular location is the cytoplasm. The protein localises to the nucleolus. Its function is as follows. Confers resistance to the antitumor agent cisplatin. Binds preferentially to sites of DNA modified by cisplatin in vitro. Binds to double-stranded DNA in a cooperative manner resulting in the formation of filament-like structures. Binds to single-stranded DNA with no cooperativity. Binds to RNA. The polypeptide is RAD52 motif-containing protein 1 (RDM1) (Gallus gallus (Chicken)).